The following is a 418-amino-acid chain: Delta(14)-sterol reductase TM7SF2 (418 aa).

The next 6 membrane-spanning stretches (helical) occupy residues 13–35 (FGGPLGVAALLILLPATMFHLLL), 62–81 (ALLLLFIWLGLQVALYLLPA), 102–124 (GFQALVLTALLMGLGVSVGLPLG), 129–148 (MLLPLAFATTLTSFIFSLLL), 255–277 (FGFMLVFGDLAWVPFTYSLQAQF), and 287–304 (LPMALLICLLKVIGYYIF). NADP(+) contacts are provided by residues Lys311, Arg315, Leu338, Trp343, and 350-351 (NY). A helical transmembrane segment spans residues 355-377 (LIMALAWSLPCGLSHLLPYFYVL). NADP(+) is bound by residues Asp390, 394 to 398 (CLQKY), and Tyr405.

This sequence belongs to the ERG4/ERG24 family. Strongly expressed in liver, weaker in ovary, testis, kidney and brain.

The protein localises to the endoplasmic reticulum membrane. It localises to the microsome membrane. The catalysed reaction is 4,4-dimethyl-5alpha-cholesta-8,24-dien-3beta-ol + NADP(+) = 4,4-dimethyl-5alpha-cholesta-8,14,24-trien-3beta-ol + NADPH + H(+). The enzyme catalyses 5alpha-cholest-8,14-dien-3beta-ol + NADPH + H(+) = 5alpha-cholest-8-en-3beta-ol + NADP(+). It carries out the reaction 4,4-dimethyl-8,14-cholestadien-3beta-ol + NADPH + H(+) = 4,4-dimethyl-5alpha-cholest-8-en-3beta-ol + NADP(+). It functions in the pathway steroid biosynthesis; cholesterol biosynthesis. Its function is as follows. Catalyzes the reduction of the C14-unsaturated bond of lanosterol, as part of the metabolic pathway leading to cholesterol biosynthesis. This chain is Delta(14)-sterol reductase TM7SF2 (Tm7sf2), found in Mus musculus (Mouse).